Reading from the N-terminus, the 416-residue chain is Tyrosine--tRNA ligase (416 aa).

Y34 provides a ligand contact to L-tyrosine. The short motif at 39–48 is the 'HIGH' region element; it reads PTGDSLHIGH. Residues Y165 and Q169 each contribute to the L-tyrosine site. The short motif at 227–231 is the 'KMSKS' region element; it reads KFGKT. Position 230 (K230) interacts with ATP. The 68-residue stretch at 349–416 folds into the S4 RNA-binding domain; it reads KNIVEWLVDT…KKKYFLARVK (68 aa).

The protein belongs to the class-I aminoacyl-tRNA synthetase family. TyrS type 1 subfamily. As to quaternary structure, homodimer.

It localises to the cytoplasm. It catalyses the reaction tRNA(Tyr) + L-tyrosine + ATP = L-tyrosyl-tRNA(Tyr) + AMP + diphosphate + H(+). Functionally, catalyzes the attachment of tyrosine to tRNA(Tyr) in a two-step reaction: tyrosine is first activated by ATP to form Tyr-AMP and then transferred to the acceptor end of tRNA(Tyr). This chain is Tyrosine--tRNA ligase, found in Ligilactobacillus salivarius (strain UCC118) (Lactobacillus salivarius).